A 167-amino-acid polypeptide reads, in one-letter code: Peptidyl-prolyl cis-trans isomerase-like 3 (167 aa).

In terms of domain architecture, PPIase cyclophilin-type spans 1–160 (MSVTLHTSHG…EPVRIENVTI (160 aa)).

This sequence belongs to the cyclophilin-type PPIase family. PPIL3 subfamily.

The enzyme catalyses [protein]-peptidylproline (omega=180) = [protein]-peptidylproline (omega=0). In terms of biological role, PPIases accelerate the folding of proteins. It catalyzes the cis-trans isomerization of proline imidic peptide bonds in oligopeptides. The protein is Peptidyl-prolyl cis-trans isomerase-like 3 (CYP10) of Gibberella zeae (strain ATCC MYA-4620 / CBS 123657 / FGSC 9075 / NRRL 31084 / PH-1) (Wheat head blight fungus).